The following is a 47-amino-acid chain: uncharacterized protein (47 aa).

Positions 2–47 (LRVRKRDGRLEEFSRAKIVRTCLRAGASKKIAEKVAEELKRGYTMG) constitute an ATP-cone domain.

This is an uncharacterized protein from Archaeoglobus fulgidus (strain ATCC 49558 / DSM 4304 / JCM 9628 / NBRC 100126 / VC-16).